Consider the following 203-residue polypeptide: Large ribosomal subunit protein bL25 (203 aa).

This sequence belongs to the bacterial ribosomal protein bL25 family. CTC subfamily. As to quaternary structure, part of the 50S ribosomal subunit; part of the 5S rRNA/L5/L18/L25 subcomplex. Contacts the 5S rRNA. Binds to the 5S rRNA independently of L5 and L18.

Functionally, this is one of the proteins that binds to the 5S RNA in the ribosome where it forms part of the central protuberance. In Cellvibrio japonicus (strain Ueda107) (Pseudomonas fluorescens subsp. cellulosa), this protein is Large ribosomal subunit protein bL25.